The following is a 111-amino-acid chain: Ribonuclease P protein component (111 aa).

The protein belongs to the RnpA family. As to quaternary structure, consists of a catalytic RNA component (M1 or rnpB) and a protein subunit.

The enzyme catalyses Endonucleolytic cleavage of RNA, removing 5'-extranucleotides from tRNA precursor.. Functionally, RNaseP catalyzes the removal of the 5'-leader sequence from pre-tRNA to produce the mature 5'-terminus. It can also cleave other RNA substrates such as 4.5S RNA. The protein component plays an auxiliary but essential role in vivo by binding to the 5'-leader sequence and broadening the substrate specificity of the ribozyme. The protein is Ribonuclease P protein component of Streptococcus thermophilus (strain ATCC BAA-491 / LMD-9).